The primary structure comprises 346 residues: DNA primase small subunit PriS (346 aa).

Catalysis depends on residues aspartate 95 and aspartate 97. Zn(2+)-binding residues include cysteine 106, histidine 108, cysteine 114, and cysteine 117. The Zinc knuckle motif motif lies at 106-117 (CEHEPGTVCPIC). Residue aspartate 280 is part of the active site.

The protein belongs to the eukaryotic-type primase small subunit family. Heterodimer of a small subunit (PriS) and a large subunit (PriL). The cofactor is Mg(2+). Mn(2+) is required as a cofactor.

Functionally, catalytic subunit of DNA primase, an RNA polymerase that catalyzes the synthesis of short RNA molecules used as primers for DNA polymerase during DNA replication. The small subunit contains the primase catalytic core and has DNA synthesis activity on its own. Binding to the large subunit stabilizes and modulates the activity, increasing the rate of DNA synthesis while decreasing the length of the DNA fragments, and conferring RNA synthesis capability. The DNA polymerase activity may enable DNA primase to also catalyze primer extension after primer synthesis. May also play a role in DNA repair. The chain is DNA primase small subunit PriS from Pyrococcus horikoshii (strain ATCC 700860 / DSM 12428 / JCM 9974 / NBRC 100139 / OT-3).